We begin with the raw amino-acid sequence, 453 residues long: DNA repair protein RadA (453 aa).

The C4-type zinc finger occupies 10–27 (CQECGYQSPKYLGRCPNC). 95–102 (GDPGIGKS) is a binding site for ATP. The RadA KNRFG motif signature appears at 251–255 (KNRFG). The segment at 350–453 (DAYLKSAGGV…VGQVLNAVFS (104 aa)) is lon-protease-like.

It belongs to the RecA family. RadA subfamily.

DNA-dependent ATPase involved in processing of recombination intermediates, plays a role in repairing DNA breaks. Stimulates the branch migration of RecA-mediated strand transfer reactions, allowing the 3' invading strand to extend heteroduplex DNA faster. Binds ssDNA in the presence of ADP but not other nucleotides, has ATPase activity that is stimulated by ssDNA and various branched DNA structures, but inhibited by SSB. Does not have RecA's homology-searching function. This chain is DNA repair protein RadA, found in Streptococcus pyogenes serotype M1.